Consider the following 123-residue polypeptide: Small ribosomal subunit protein uS12 (123 aa).

The interval 1 to 45 (MPTINQLIRKKRQSGATRKKSPALQKSPQKRGVCLQVKTKTPKKP) is disordered. The segment covering 8 to 21 (IRKKRQSGATRKKS) has biased composition (basic residues).

The protein belongs to the universal ribosomal protein uS12 family. As to quaternary structure, part of the 30S ribosomal subunit. Contacts proteins S8 and S17. May interact with IF1 in the 30S initiation complex.

Functionally, with S4 and S5 plays an important role in translational accuracy. Its function is as follows. Interacts with and stabilizes bases of the 16S rRNA that are involved in tRNA selection in the A site and with the mRNA backbone. Located at the interface of the 30S and 50S subunits, it traverses the body of the 30S subunit contacting proteins on the other side and probably holding the rRNA structure together. The combined cluster of proteins S8, S12 and S17 appears to hold together the shoulder and platform of the 30S subunit. The sequence is that of Small ribosomal subunit protein uS12 from Chlamydia muridarum (strain MoPn / Nigg).